Consider the following 246-residue polypeptide: tRNA (guanine-N(1)-)-methyltransferase (246 aa).

S-adenosyl-L-methionine contacts are provided by residues glycine 114 and 133–138 (LGDYVL).

The protein belongs to the RNA methyltransferase TrmD family. Homodimer.

The protein localises to the cytoplasm. The catalysed reaction is guanosine(37) in tRNA + S-adenosyl-L-methionine = N(1)-methylguanosine(37) in tRNA + S-adenosyl-L-homocysteine + H(+). Specifically methylates guanosine-37 in various tRNAs. The chain is tRNA (guanine-N(1)-)-methyltransferase from Enterococcus faecalis (strain ATCC 700802 / V583).